The sequence spans 268 residues: Undecaprenyl-diphosphatase 1 (268 aa).

7 helical membrane-spanning segments follow: residues 5 to 25 (TIVEALLLGLLEGLTEFIPVS), 43 to 63 (GKAFEILIQLGAILAILSVYF), 81 to 101 (HFVIGILIAFLPAAIIGALAH), 107 to 127 (VLFESPRLICTMLIIGGVILL), 185 to 205 (AEFSFFLAIPTMVGAFAFDLF), 214 to 234 (ADLPIIAIGFVAAFVTALFVV), and 248 to 268 (LFGWWRLVVGIVGLVALMIWG).

This sequence belongs to the UppP family.

The protein resides in the cell inner membrane. It carries out the reaction di-trans,octa-cis-undecaprenyl diphosphate + H2O = di-trans,octa-cis-undecaprenyl phosphate + phosphate + H(+). In terms of biological role, catalyzes the dephosphorylation of undecaprenyl diphosphate (UPP). Confers resistance to bacitracin. The polypeptide is Undecaprenyl-diphosphatase 1 (Mesorhizobium japonicum (strain LMG 29417 / CECT 9101 / MAFF 303099) (Mesorhizobium loti (strain MAFF 303099))).